An 84-amino-acid chain; its full sequence is Sec-independent protein translocase protein TatA (84 aa).

Residues 1–21 traverse the membrane as a helical segment; the sequence is MPNLGVPELLIIALVIFLLFG. Residues 42-57 show a composition bias toward basic and acidic residues; it reads EMDEMKTDGDKKELAE. Residues 42 to 84 form a disordered region; sequence EMDEMKTDGDKKELAEKQAPTAEQQQAQDLAQPKSEQPNEHNA. Over residues 62 to 77 the composition is skewed to polar residues; that stretch reads TAEQQQAQDLAQPKSE.

The protein belongs to the TatA/E family. In terms of assembly, the Tat system comprises two distinct complexes: a TatABC complex, containing multiple copies of TatA, TatB and TatC subunits, and a separate TatA complex, containing only TatA subunits. Substrates initially bind to the TatABC complex, which probably triggers association of the separate TatA complex to form the active translocon.

The protein resides in the cell membrane. Part of the twin-arginine translocation (Tat) system that transports large folded proteins containing a characteristic twin-arginine motif in their signal peptide across membranes. TatA could form the protein-conducting channel of the Tat system. In Corynebacterium jeikeium (strain K411), this protein is Sec-independent protein translocase protein TatA.